A 671-amino-acid chain; its full sequence is Phosphoenolpyruvate carboxykinase (ATP) 1 (671 aa).

Positions 1–10 (MSAGNGNATN) are enriched in low complexity. The tract at residues 1–44 (MSAGNGNATNGDGGFSFPKGPVMPKITTGAAKRGSGVCHDDSGP) is disordered. Residue S2 is modified to N-acetylserine. S62 carries the phosphoserine modification. Phosphothreonine is present on T66. The tract at residues 100–127 (TRESGPKVVRGDPAEKKTDGSTTPAYAH) is disordered. The segment covering 108-118 (VRGDPAEKKTD) has biased composition (basic and acidic residues). R189 serves as a coordination point for substrate. Residues H270 and N271 each coordinate Ca(2+). Residues Y328 and K334 each contribute to the substrate site. Residues K334, H353, and 369 to 377 (GLSGTGKTT) each bind ATP. Residues K334 and H353 each contribute to the Mn(2+) site. Residue D390 participates in Mn(2+) binding. G404 contributes to the Ca(2+) binding site. Residues E418, R455, 574–575 (RI), I575, and T580 each bind ATP. R455 provides a ligand contact to substrate.

This sequence belongs to the phosphoenolpyruvate carboxykinase (ATP) family. In terms of assembly, monomer. Mn(2+) serves as cofactor. As to expression, expressed in cotyledons, flowers, siliques, seeds, leaves, stems and roots. Localized in mid-veins.

The protein localises to the cytoplasm. It catalyses the reaction oxaloacetate + ATP = phosphoenolpyruvate + ADP + CO2. The protein operates within carbohydrate biosynthesis; gluconeogenesis. With respect to regulation, allosterically activated by calcium. It may represent the only case of a monomeric, allosteric enzyme. Functionally, involved in the gluconeogenesis. Catalyzes the conversion of oxaloacetate (OAA) to phosphoenolpyruvate (PEP) through direct phosphoryl transfer between the nucleoside triphosphate and OAA. The chain is Phosphoenolpyruvate carboxykinase (ATP) 1 from Arabidopsis thaliana (Mouse-ear cress).